A 365-amino-acid polypeptide reads, in one-letter code: Protein mab-21-like (365 aa).

Belongs to the mab-21 family.

The polypeptide is Protein mab-21-like (Aedes aegypti (Yellowfever mosquito)).